The chain runs to 1045 residues: Probable sucrose-phosphate synthase (1045 aa).

Composition is skewed to basic and acidic residues over residues 93–115 (ENEEAQRKTKRRMELERGRREAT) and 124–137 (EGEKDISAHGDSTR). 3 disordered regions span residues 93–141 (ENEE…PRLP), 222–243 (WSYGEPTEMLNPRDSNGFDDDD), and 662–692 (IASSRQRQPQWQRSSDEGLDNQEPESPSDSL). Over residues 664–674 (SSRQRQPQWQR) the composition is skewed to low complexity.

The protein belongs to the glycosyltransferase 1 family. Homodimer or homotetramer. In terms of tissue distribution, predominantly active in tap root.

The enzyme catalyses beta-D-fructose 6-phosphate + UDP-alpha-D-glucose = sucrose 6(F)-phosphate + UDP + H(+). The protein operates within glycan biosynthesis; sucrose biosynthesis; sucrose from D-fructose 6-phosphate and UDP-alpha-D-glucose: step 1/2. With respect to regulation, activity is regulated by phosphorylation and moderated by concentration of metabolites and light. Its function is as follows. Plays a role in photosynthetic sucrose synthesis by catalyzing the rate-limiting step of sucrose biosynthesis from UDP-glucose and fructose- 6-phosphate. Involved in the regulation of carbon partitioning in the leaves of plants. May regulate the synthesis of sucrose and therefore play a major role as a limiting factor in the export of photoassimilates out of the leaf. Plays a role for sucrose availability that is essential for plant growth and fiber elongation. The protein is Probable sucrose-phosphate synthase (SPS) of Beta vulgaris (Sugar beet).